The chain runs to 521 residues: Bifunctional purine biosynthesis protein PurH (521 aa).

The region spanning 1–145 (MIKQALISVS…KNHKDVIVIC (145 aa)) is the MGS-like domain.

This sequence belongs to the PurH family.

It carries out the reaction (6R)-10-formyltetrahydrofolate + 5-amino-1-(5-phospho-beta-D-ribosyl)imidazole-4-carboxamide = 5-formamido-1-(5-phospho-D-ribosyl)imidazole-4-carboxamide + (6S)-5,6,7,8-tetrahydrofolate. The enzyme catalyses IMP + H2O = 5-formamido-1-(5-phospho-D-ribosyl)imidazole-4-carboxamide. Its pathway is purine metabolism; IMP biosynthesis via de novo pathway; 5-formamido-1-(5-phospho-D-ribosyl)imidazole-4-carboxamide from 5-amino-1-(5-phospho-D-ribosyl)imidazole-4-carboxamide (10-formyl THF route): step 1/1. It functions in the pathway purine metabolism; IMP biosynthesis via de novo pathway; IMP from 5-formamido-1-(5-phospho-D-ribosyl)imidazole-4-carboxamide: step 1/1. The chain is Bifunctional purine biosynthesis protein PurH from Herminiimonas arsenicoxydans.